Here is a 235-residue protein sequence, read N- to C-terminus: Protein YIP4 (235 aa).

5 consecutive transmembrane segments (helical) span residues 89-109 (ISAN…SLFV), 114-134 (SLFS…ALHL), 145-165 (LISY…NALV), 186-206 (VLSL…VAAV), and 215-235 (IIEI…STIL).

It belongs to the YIP1 family. Interacts with TVP18, TVP23, YIP1 and YIP5. Interacts with SEC4, YPT1, YPT6, YPT7, YPT10, YPT11, YPT31, YPT32 and YPT52; These proteins are all Rab GTPases.

It localises to the golgi apparatus membrane. Functionally, may be involved in proper membrane localization of Rab GTPases. The chain is Protein YIP4 (YIP4) from Saccharomyces cerevisiae (strain ATCC 204508 / S288c) (Baker's yeast).